The following is a 409-amino-acid chain: Glucose-1-phosphate adenylyltransferase (409 aa).

Alpha-D-glucose 1-phosphate is bound by residues glycine 168, 183 to 184, and serine 201; that span reads EK.

The protein belongs to the bacterial/plant glucose-1-phosphate adenylyltransferase family. Homotetramer.

It catalyses the reaction alpha-D-glucose 1-phosphate + ATP + H(+) = ADP-alpha-D-glucose + diphosphate. The protein operates within glycan biosynthesis; glycogen biosynthesis. Its function is as follows. Involved in the biosynthesis of ADP-glucose, a building block required for the elongation reactions to produce glycogen. Catalyzes the reaction between ATP and alpha-D-glucose 1-phosphate (G1P) to produce pyrophosphate and ADP-Glc. The chain is Glucose-1-phosphate adenylyltransferase from Corynebacterium efficiens (strain DSM 44549 / YS-314 / AJ 12310 / JCM 11189 / NBRC 100395).